Reading from the N-terminus, the 382-residue chain is MRLSIIAAVLPLALAAPVAEPEIAPLIEARGAQPIAGKYIVKLKDEAKFGIMNAKSKIPGIERVYENVLNGFSATLSNEELERLRRDPDVESIEQDAIFSINAITQQQGATWGLTRISHRARGSTAYAYDTSAGAGACVYVIDTGVEDTHPDFEGRAKQIKSYASTARDGHGHGTHCAGTIGSKTWGVAKKVSIFGVKVLDDSGSGSLSNIVAGMDFVASDRQSRNCPRRTVASMSLGGGYSAALNQAAARLQSSGVFVAVAAGNDNRDAANTSPASEPTVCTVGATDSNDVRSTFSNYGRVVDIFAPGTSITSTWIGGRTNTISGTSMATPHIAGLAAYLFGLEGGSAGAMCGRIQTLSTKNVLTSIPSGTVNYLAFNGAT.

A signal peptide spans 1–15 (MRLSIIAAVLPLALA). Residues 16-102 (APVAEPEIAP…IEQDAIFSIN (87 aa)) constitute a propeptide that is removed on maturation. In terms of domain architecture, Inhibitor I9 spans 56-99 (SKIPGIERVYENVLNGFSATLSNEELERLRRDPDVESIEQDAIF). The 272-residue stretch at 111–382 (TWGLTRISHR…VNYLAFNGAT (272 aa)) folds into the Peptidase S8 domain. Disulfide bonds link Cys138/Cys227 and Cys282/Cys353. Active-site charge relay system residues include Asp143, His173, and Ser328.

It belongs to the peptidase S8 family.

It localises to the secreted. With respect to regulation, inhibited by phenylmethylsulfonyl fluoride (PMSF). Functionally, serine protease which can degrade the nematode cuticle. The sequence is that of Alkaline serine protease ver112 from Corniculantispora psalliotae (Lecanicillium psalliotae).